The primary structure comprises 246 residues: Small ribosomal subunit protein uS2 (246 aa).

This sequence belongs to the universal ribosomal protein uS2 family.

This is Small ribosomal subunit protein uS2 from Chromohalobacter salexigens (strain ATCC BAA-138 / DSM 3043 / CIP 106854 / NCIMB 13768 / 1H11).